We begin with the raw amino-acid sequence, 127 residues long: Turripeptide OL172 (127 aa).

The signal sequence occupies residues 1 to 20 (MFSTLIFLTAVTLLMMPSQT). Positions 42–43 (QR) are excised as a propeptide. Gln-44 carries the pyrrolidone carboxylic acid modification. A propeptide spanning residues 73–75 (QRK) is cleaved from the precursor. Position 76 is a pyrrolidone carboxylic acid (Gln-76). Positions 104-106 (QRK) are excised as a propeptide. A Pyrrolidone carboxylic acid modification is found at Gln-107.

In terms of processing, the turripeptide OL172 conotoxin-like contains 2 disulfide bonds. In terms of tissue distribution, expressed by the venom duct.

It localises to the secreted. Functionally, acts as a neurotoxin by inhibiting an ion channel. This chain is Turripeptide OL172, found in Iotyrris olangoensis (Sea snail).